The following is a 103-amino-acid chain: Large ribosomal subunit protein bL21 (103 aa).

Belongs to the bacterial ribosomal protein bL21 family. As to quaternary structure, part of the 50S ribosomal subunit. Contacts protein L20.

This protein binds to 23S rRNA in the presence of protein L20. This Delftia acidovorans (strain DSM 14801 / SPH-1) protein is Large ribosomal subunit protein bL21.